The primary structure comprises 320 residues: Cytochrome c biogenesis protein CcsA (320 aa).

Transmembrane regions (helical) follow at residues 9–29, 36–56, 70–90, 97–117, 143–163, 227–247, 254–274, and 288–308; these read ILAH…WGTL, LSSS…GLLI, LYES…LLEV, WLGA…TLGL, ILFS…LLVI, AIGL…IWAN, WSWD…AIYL, and AIVA…VNLL.

This sequence belongs to the CcmF/CycK/Ccl1/NrfE/CcsA family. In terms of assembly, may interact with Ccs1.

It is found in the plastid. The protein localises to the chloroplast thylakoid membrane. Its function is as follows. Required during biogenesis of c-type cytochromes (cytochrome c6 and cytochrome f) at the step of heme attachment. The sequence is that of Cytochrome c biogenesis protein CcsA from Pinus thunbergii (Japanese black pine).